Consider the following 307-residue polypeptide: Ornithine carbamoyltransferase (307 aa).

Carbamoyl phosphate-binding positions include 51–54 (STRT), Q78, R102, and 129–132 (HPVQ). L-ornithine is bound by residues N159, D223, and 227–228 (SM). Residues 263–264 (CL) and R291 each bind carbamoyl phosphate.

This sequence belongs to the aspartate/ornithine carbamoyltransferase superfamily. OTCase family.

It is found in the cytoplasm. The enzyme catalyses carbamoyl phosphate + L-ornithine = L-citrulline + phosphate + H(+). The protein operates within amino-acid biosynthesis; L-arginine biosynthesis; L-arginine from L-ornithine and carbamoyl phosphate: step 1/3. Its function is as follows. Reversibly catalyzes the transfer of the carbamoyl group from carbamoyl phosphate (CP) to the N(epsilon) atom of ornithine (ORN) to produce L-citrulline. This chain is Ornithine carbamoyltransferase, found in Wolinella succinogenes (strain ATCC 29543 / DSM 1740 / CCUG 13145 / JCM 31913 / LMG 7466 / NCTC 11488 / FDC 602W) (Vibrio succinogenes).